A 249-amino-acid polypeptide reads, in one-letter code: Undecaprenyl-diphosphatase (249 aa).

8 consecutive transmembrane segments (helical) span residues glycine 11–phenylalanine 31, proline 35–valine 55, leucine 80–serine 100, valine 101–leucine 121, isoleucine 135–isoleucine 155, alanine 175–leucine 195, alanine 202–valine 222, and valine 226–leucine 246.

The protein belongs to the UppP family.

It localises to the cell membrane. It catalyses the reaction di-trans,octa-cis-undecaprenyl diphosphate + H2O = di-trans,octa-cis-undecaprenyl phosphate + phosphate + H(+). Catalyzes the dephosphorylation of undecaprenyl diphosphate (UPP). The polypeptide is Undecaprenyl-diphosphatase (Methanococcus maripaludis (strain C5 / ATCC BAA-1333)).